A 296-amino-acid chain; its full sequence is Protease HtpX homolog (296 aa).

2 helical membrane passes run 14 to 34 (VFLL…VGYL) and 38 to 58 (SLVT…VIMI). Position 144 (histidine 144) interacts with Zn(2+). Glutamate 145 is an active-site residue. Histidine 148 serves as a coordination point for Zn(2+). 2 consecutive transmembrane segments (helical) span residues 159-179 (IALA…NWWL) and 198-218 (LLVF…AAVI). Position 227 (glutamate 227) interacts with Zn(2+).

This sequence belongs to the peptidase M48B family. Requires Zn(2+) as cofactor.

Its subcellular location is the cell membrane. The sequence is that of Protease HtpX homolog from Leuconostoc citreum (strain KM20).